The chain runs to 151 residues: Small ribosomal subunit protein uS15 (151 aa).

The protein belongs to the universal ribosomal protein uS15 family.

This Wuchereria bancrofti protein is Small ribosomal subunit protein uS15 (RPS13).